Consider the following 115-residue polypeptide: Type 3 secretion system chaperone YscG (115 aa).

Belongs to the YscG family. As to quaternary structure, component of the heterodimeric YscE-YscG chaperone. The YscE-YscG chaperone forms a stable ternary complex with YscF/SctF.

Its subcellular location is the cytoplasm. Its function is as follows. Chaperone of the type III secretion system (T3SS), also called injectisome, which is used to inject bacterial effector proteins into eukaryotic host cells. Along with YscE, prevents premature polymerization of the YscF/SctF needle protein within the cytoplasm. Required for Yop secretion. This is Type 3 secretion system chaperone YscG from Yersinia enterocolitica.